A 115-amino-acid polypeptide reads, in one-letter code: uncharacterized protein (115 aa).

The next 2 membrane-spanning stretches (helical) occupy residues 15–35 (FSTQ…EVLF) and 52–72 (FDGV…YYSI).

The protein localises to the membrane. This is an uncharacterized protein from Saccharomyces cerevisiae (strain ATCC 204508 / S288c) (Baker's yeast).